The following is a 58-amino-acid chain: Large ribosomal subunit protein bL32c (58 aa).

The segment covering 1–19 has biased composition (basic residues); it reads MAVPKKRKSKMKTRLRKAQ. Residues 1 to 25 are disordered; it reads MAVPKKRKSKMKTRLRKAQWKSEAS.

It belongs to the bacterial ribosomal protein bL32 family.

Its subcellular location is the plastid. The protein resides in the chloroplast. In Chlorella vulgaris (Green alga), this protein is Large ribosomal subunit protein bL32c (rpl32).